Consider the following 650-residue polypeptide: Probable acyl-CoA dehydrogenase FadE10 (650 aa).

The tract at residues 1–23 (MAQQTQVTEEQARALAEESRESG) is disordered. The span at 10 to 23 (EQARALAEESRESG) shows a compositional bias: basic and acidic residues. The active-site Proton acceptor is E422.

Belongs to the acyl-CoA dehydrogenase family. FAD serves as cofactor.

The catalysed reaction is a 2,3-saturated acyl-CoA + A = a 2,3-dehydroacyl-CoA + AH2. This is Probable acyl-CoA dehydrogenase FadE10 (fadE10) from Mycobacterium tuberculosis (strain CDC 1551 / Oshkosh).